Here is an 84-residue protein sequence, read N- to C-terminus: Translational regulator CsrA (84 aa).

The protein belongs to the CsrA/RsmA family. As to quaternary structure, homodimer; the beta-strands of each monomer intercalate to form a hydrophobic core, while the alpha-helices form wings that extend away from the core.

It localises to the cytoplasm. Its function is as follows. A translational regulator that binds mRNA to regulate translation initiation and/or mRNA stability. Usually binds in the 5'-UTR at or near the Shine-Dalgarno sequence preventing ribosome-binding, thus repressing translation. Its main target seems to be the major flagellin gene, while its function is anatagonized by FliW. In Leptospira interrogans serogroup Icterohaemorrhagiae serovar Lai (strain 56601), this protein is Translational regulator CsrA.